A 347-amino-acid polypeptide reads, in one-letter code: GMP reductase (347 aa).

108–131 contacts NADP(+); it reads ADFEKTKQILAQSPALNFVCIDVA. Gly-181 and Gly-183 together coordinate K(+). Residue Cys-186 is the Thioimidate intermediate of the active site. 216-239 serves as a coordination point for NADP(+); sequence IVSDGGCTMPGDVAKAFGGGADFV.

It belongs to the IMPDH/GMPR family. GuaC type 1 subfamily. Homotetramer.

It carries out the reaction IMP + NH4(+) + NADP(+) = GMP + NADPH + 2 H(+). In terms of biological role, catalyzes the irreversible NADPH-dependent deamination of GMP to IMP. It functions in the conversion of nucleobase, nucleoside and nucleotide derivatives of G to A nucleotides, and in maintaining the intracellular balance of A and G nucleotides. In Citrobacter koseri (strain ATCC BAA-895 / CDC 4225-83 / SGSC4696), this protein is GMP reductase.